We begin with the raw amino-acid sequence, 150 residues long: Transcriptional repressor NrdR (150 aa).

Residues 3–34 fold into a zinc finger; that stretch reads CPFCGYEETKVLDSRPVSNGTSIRRRRECLQC. An ATP-cone domain is found at 49–139; it reads IRIIKKDGRR…VYKEFRDLDS (91 aa).

Belongs to the NrdR family. It depends on Zn(2+) as a cofactor.

Its function is as follows. Negatively regulates transcription of bacterial ribonucleotide reductase nrd genes and operons by binding to NrdR-boxes. This chain is Transcriptional repressor NrdR, found in Petrotoga mobilis (strain DSM 10674 / SJ95).